The sequence spans 20 residues: Alpha-conotoxin-like ts14a (20 aa).

2 disulfides stabilise this stretch: C3–C16 and C14–C20.

Expressed by the venom duct.

It is found in the secreted. Alpha-conotoxins act on postsynaptic membranes, they bind to the nicotinic acetylcholine receptors (nAChR) and thus inhibit them. This chain is Alpha-conotoxin-like ts14a, found in Conus tessulatus (Tessellate cone).